The sequence spans 827 residues: Disintegrin and metalloproteinase domain-containing protein 17 (827 aa).

The signal sequence occupies residues 1 to 17 (MRQRLLFLTTLVPFVLA). A propeptide spanning residues 18-214 (PRPPEEPGSG…SEEFVRRVKR (197 aa)) is cleaved from the precursor. The N-linked (GlcNAc...) asparagine glycan is linked to Asn157. Positions 182-189 (KVCGYLNA) match the Cysteine switch motif. Zn(2+) is bound at residue Cys184. At 215 to 671 (RAEPNPLKNT…NTFGKFLADN (457 aa)) the chain is on the extracellular side. The Peptidase M12B domain maps to 223-474 (NTCKLLVVAD…KAQECFQERS (252 aa)). 3 disulfide bridges follow: Cys225-Cys333, Cys365-Cys469, and Cys423-Cys453. Asn264 is a glycosylation site (N-linked (GlcNAc...) asparagine). His405 contacts Zn(2+). Glu406 is a catalytic residue. Zn(2+)-binding residues include His409 and His415. 4 N-linked (GlcNAc...) asparagine glycosylation sites follow: Asn452, Asn498, Asn539, and Asn551. A Disintegrin domain is found at 475–563 (NKVCGNSRVD…ECPPPGDAED (89 aa)). Intrachain disulfides connect Cys534/Cys555, Cys573/Cys582, Cys578/Cys591, and Cys593/Cys600. Residues 603 to 671 (CCRNLSGPCV…NTFGKFLADN (69 aa)) form a crambin-like region. Residue Asn606 is glycosylated (N-linked (GlcNAc...) asparagine). The helical transmembrane segment at 672–692 (IVGSVLVFSLIFWIPFSILVH) threads the bilayer. The Cytoplasmic segment spans residues 693–827 (CVDKKLDKQY…SRVDSKETEC (135 aa)). An SH3-binding motif is present at residues 731–738 (PAPQTPGR). Thr735 carries the post-translational modification Phosphothreonine; by MAPK14. Thr764 carries the phosphothreonine modification. Residues 766 to 827 (QEDPSTDSHV…SRVDSKETEC (62 aa)) form a disordered region. Ser770 is subject to Phosphoserine. 3 stretches are compositionally biased toward basic and acidic residues: residues 771-784 (TDSH…EKDP), 794-810 (SFED…EKAA), and 818-827 (SRVDSKETEC). Phosphoserine is present on residues Ser794 and Ser822.

Interacts with MAD2L1, MAPK14 and MUC1. Interacts with iRhom1/RHBDF1 and iRhom2/RHBDF2. Interacts with FRMD8 via its interaction with iRhom1/RHBDF1 and iRhom2/RHBDF2. Interacts with TSPAN8. Requires Zn(2+) as cofactor. Post-translationally, the precursor is cleaved by a furin endopeptidase. Phosphorylated. Stimulation by growth factor or phorbol 12-myristate 13-acetate induces phosphorylation of Ser-822 but decreases phosphorylation of Ser-794. Phosphorylation at Thr-735 by MAPK14 is required for ADAM17-mediated ectodomain shedding.

The protein resides in the membrane. It carries out the reaction Narrow endopeptidase specificity. Cleaves Pro-Leu-Ala-Gln-Ala-|-Val-Arg-Ser-Ser-Ser in the membrane-bound, 26-kDa form of tumor necrosis factor alpha (TNFalpha). Similarly cleaves other membrane-anchored, cell-surface proteins to 'shed' the extracellular domains.. Transmembrane metalloprotease which mediates the ectodomain shedding of a myriad of transmembrane proteins including adhesion proteins, growth factor precursors and cytokines important for inflammation and immunity. Cleaves the membrane-bound precursor of TNF-alpha to its mature soluble form. Responsible for the proteolytical release of soluble JAM3 from endothelial cells surface. Responsible for the proteolytic release of several other cell-surface proteins, including p75 TNF-receptor, interleukin 1 receptor type II, p55 TNF-receptor, transforming growth factor-alpha, L-selectin, growth hormone receptor, MUC1 and the amyloid precursor protein. Acts as an activator of Notch pathway by mediating cleavage of Notch, generating the membrane-associated intermediate fragment called Notch extracellular truncation (NEXT). Plays a role in the proteolytic processing of ACE2. Plays a role in hemostasis through shedding of GP1BA, the platelet glycoprotein Ib alpha chain. Mediates the proteolytic cleavage of LAG3, leading to release the secreted form of LAG3. Mediates the proteolytic cleavage of IL6R, leading to the release of secreted form of IL6R. Mediates the proteolytic cleavage and shedding of FCGR3A upon NK cell stimulation, a mechanism that allows for increased NK cell motility and detachment from opsonized target cells. Cleaves TREM2, resulting in shedding of the TREM2 ectodomain. This Rattus norvegicus (Rat) protein is Disintegrin and metalloproteinase domain-containing protein 17 (Adam17).